The primary structure comprises 714 residues: MIFGFHPLEGGYDVPMRVVGANIPYEWLIYVIMLIPVSVFLFGFWKKLEVWLLAKGEIHRNDKIAQRIWSWFVFSFAQARVIRKPLAGWMHAFLFWGFLVLFLAAGIDAMHNMISWPHLEGNFYIGFSWVVDVLGFLALIGVMVLGFVRYFQKPERLNDTKSSDGWIILLIFAILLTGYFIEGLRIAAQIKLSTTMQQIAYERAASPFGWMFASFFGSMSVDAMLMWHRLLWWFHMAIAFLFIALVPFTKLWHIFASMLNYTFRDLEPSANRMVYNIEEAETFGVENIEDFGWKDLLDLDSCIRCGRCQENCPAYNTGKHLNPKITLIQNMKAHLDAKAPYLLAAKASGAEVEEMAMTEEAAAEEVNPMEQSLLYDVVGSETIWDCTNCRACMEHCPMFIEHIPKIVEMRRNLVMWQGDMPGEAQMAFTNMERNYNPWGVGWAGRAGWLDERGVREMVNLLPEDGKEFEYLLYAGCAVSFDDRYKRVGEALVRLLNKAGVSFGYLGTEEYCCGDSARRLGNEYLYQTLVSQNLESFNNYGVKKIIVVCPHGYTALKNEYPQMGGNYEVYHYTEILAKLVAEGKLKPSKPLGVKMTYHDSCFLGRHNGVYDQPRNVLKAAGGQVIEIEKAKEFGFCCGAGGGRMWLEEEAVLKDGIQYKRINDTRTDQLLVPNPEMIVTNCPFCLTMIADGVKAAEAEESTKVFDVAEVLWKAME.

Helical transmembrane passes span 25-45 (YEWLIYVIMLIPVSVFLFGFW), 87-107 (AGWMHAFLFWGFLVLFLAAGI), 125-145 (IGFSWVVDVLGFLALIGVMVL), 164-184 (DGWIILLIFAILLTGYFIEGL), 207-227 (PFGWMFASFFGSMSVDAMLMW), and 236-256 (MAIAFLFIALVPFTKLWHIFA). 2 4Fe-4S ferredoxin-type domains span residues 293–324 (WKDLLDLDSCIRCGRCQENCPAYNTGKHLNPK) and 375–405 (YDVVGSETIWDCTNCRACMEHCPMFIEHIPK). [4Fe-4S] cluster contacts are provided by cysteine 302, cysteine 305, cysteine 308, cysteine 312, cysteine 386, cysteine 389, cysteine 392, and cysteine 396.

Might constitute a membrane-associated complex with EtfA (Swol_0697), EtfB (Swol_0696), and the butyryl-CoA dehydrogenase Swol_1933 and/or Swol_2052. [4Fe-4S] cluster is required as a cofactor.

It localises to the cell membrane. Its pathway is lipid metabolism; butanoate metabolism. Oxidoreductase involved in syntrophic growth of S.wolfei with butyrate. Is presumed to link the electron flow from butyryl-CoA dehydrogenases to the membrane, in conjunction with the electron transfer flavoprotein EtfAB. May transfer electrons to the menaquinone pool of the membrane. This Syntrophomonas wolfei subsp. wolfei (strain DSM 2245B / Goettingen) protein is EtfAB:quinone oxidoreductase.